The following is a 124-amino-acid chain: Predicted GPI-anchored protein 11 (124 aa).

The N-terminal stretch at 1-18 (MKFQFVTALALASTMAVA) is a signal peptide. Residues 38–59 (REGGSTGAELQDNNQPTAGLFG) are disordered. Residue Ser-107 is the site of GPI-anchor amidated serine attachment. The propeptide at 108–124 (GAAGGVGNLFSGILGGL) is removed in mature form.

The protein resides in the cell membrane. This is Predicted GPI-anchored protein 11 (PGA11) from Candida albicans (strain SC5314 / ATCC MYA-2876) (Yeast).